The chain runs to 259 residues: UPF0246 protein Aave_1172 (259 aa).

It belongs to the UPF0246 family.

This Paracidovorax citrulli (strain AAC00-1) (Acidovorax citrulli) protein is UPF0246 protein Aave_1172.